Consider the following 270-residue polypeptide: NADPH-dependent aldehyde reductase-like protein, chloroplastic (270 aa).

Residues 1–53 (MSTHSSISQPPLPLAGRVAIVTGSSRGIGRAIAIHLAELGARIVINYTSKAAD) constitute a chloroplast transit peptide. 26 to 50 (RGIGRAIAIHLAELGARIVINYTSK) contacts NADP(+). Ser-165 contacts substrate. Tyr-178 serves as the catalytic Proton acceptor.

This sequence belongs to the short-chain dehydrogenases/reductases (SDR) family.

Its subcellular location is the plastid. The protein localises to the chloroplast. Aldehyde reductase that catalyzes the reduction of the aldehyde carbonyl groups on saturated and alpha,beta-unsaturated aldehydes with more than 5 carbons. The protein is NADPH-dependent aldehyde reductase-like protein, chloroplastic of Arabidopsis thaliana (Mouse-ear cress).